The chain runs to 299 residues: MNEFDRVRDYLTDLQDRICAAVEAADGKARFAEDLWKREEGGGGRTRILRDGAVFEQAGIGFSDVSGTRLPPSASAHRPELAGATWRACGVSLVFHPHNPYIPTTHMNVRYFRAERDGEVVAAWFGGGFDLTPFYPFDEDVQHWHRVAQALCEPFGEERYAAHKRWCDEYFFLRHRNETRGVGGLFFDDLGKEFEHDFAYQQAVGNGFLDAYMPIVQRRKDTAYGEREREFQLYRRGRYVEFNLVYDRGTLFGLQSGGRAESILMSLPPRVRWEYGFTPEPGSAEARLADYLIPRDWLG.

Ser92 contributes to the substrate binding site. His96 and His106 together coordinate a divalent metal cation. The active-site Proton donor is His106. 108–110 (NVR) contributes to the substrate binding site. Positions 145 and 175 each coordinate a divalent metal cation. The tract at residues 239–274 (YVEFNLVYDRGTLFGLQSGGRAESILMSLPPRVRWE) is important for dimerization. Substrate is bound at residue 257–259 (GGR).

The protein belongs to the aerobic coproporphyrinogen-III oxidase family. In terms of assembly, homodimer. It depends on a divalent metal cation as a cofactor.

Its subcellular location is the cytoplasm. The enzyme catalyses coproporphyrinogen III + O2 + 2 H(+) = protoporphyrinogen IX + 2 CO2 + 2 H2O. Its pathway is porphyrin-containing compound metabolism; protoporphyrin-IX biosynthesis; protoporphyrinogen-IX from coproporphyrinogen-III (O2 route): step 1/1. Involved in the heme biosynthesis. Catalyzes the aerobic oxidative decarboxylation of propionate groups of rings A and B of coproporphyrinogen-III to yield the vinyl groups in protoporphyrinogen-IX. The polypeptide is Oxygen-dependent coproporphyrinogen-III oxidase (Xanthomonas oryzae pv. oryzae (strain MAFF 311018)).